The primary structure comprises 193 residues: NAD(P)H-quinone oxidoreductase subunit I (193 aa).

4Fe-4S ferredoxin-type domains lie at 55–84 and 95–124; these read GRIH…VDWE and KHYS…MTEE. Cys64, Cys67, Cys70, Cys74, Cys104, Cys107, Cys110, and Cys114 together coordinate [4Fe-4S] cluster. Residues 169–193 are disordered; sequence LDPHDLPSGNQRSGKRPEEIIAESD.

Belongs to the complex I 23 kDa subunit family. As to quaternary structure, NDH-1 is composed of at least 11 different subunits. [4Fe-4S] cluster serves as cofactor.

The protein localises to the cellular thylakoid membrane. The enzyme catalyses a plastoquinone + NADH + (n+1) H(+)(in) = a plastoquinol + NAD(+) + n H(+)(out). It catalyses the reaction a plastoquinone + NADPH + (n+1) H(+)(in) = a plastoquinol + NADP(+) + n H(+)(out). Its function is as follows. NDH-1 shuttles electrons from an unknown electron donor, via FMN and iron-sulfur (Fe-S) centers, to quinones in the respiratory and/or the photosynthetic chain. The immediate electron acceptor for the enzyme in this species is believed to be plastoquinone. Couples the redox reaction to proton translocation, and thus conserves the redox energy in a proton gradient. The protein is NAD(P)H-quinone oxidoreductase subunit I of Rippkaea orientalis (strain PCC 8801 / RF-1) (Cyanothece sp. (strain PCC 8801)).